We begin with the raw amino-acid sequence, 282 residues long: RsbT co-antagonist protein RsbRC (282 aa).

2 positions are modified to phosphoserine: Ser165 and Ser174. In terms of domain architecture, STAS spans 165 to 276 (SAPVIVLFHS…STLASAIASD (112 aa)). Residue Thr186 is modified to Phosphothreonine.

In terms of assembly, probably present in the stressosome with RsbRA, RsbRB, RsbRD and RsbS. Post-translationally, phosphorylated by RsbT.

Its function is as follows. One of 4 functionally non-identical RsbR paralogs, it functions in the environmental signaling branch of the general stress response. Functionally, negative regulator of sigma-B activity. Non-phosphorylated RsbS binds to RsbT, preventing its association with RsbU. Requires any one of RsbRA, RsbRB, RsbRC or RsbRD to sequester RsbT. When RsbS and the RsbR paralog(s) are phosphorylated, they release RsbT, which can then bind and activate RsbU. This chain is RsbT co-antagonist protein RsbRC (rsbRC), found in Bacillus subtilis (strain 168).